The primary structure comprises 111 residues: MEAKAITRFVRLSPRKARLVADLVRGKSALEALDILEFTNKKAARVIKKTLSSAIANATNNFKMDEDKLVVSTIMVNQGPVLKRVMPRAMGRADIIRKPTAHITVAVSDEQ.

The protein belongs to the universal ribosomal protein uL22 family. As to quaternary structure, part of the 50S ribosomal subunit.

Its function is as follows. This protein binds specifically to 23S rRNA; its binding is stimulated by other ribosomal proteins, e.g. L4, L17, and L20. It is important during the early stages of 50S assembly. It makes multiple contacts with different domains of the 23S rRNA in the assembled 50S subunit and ribosome. In terms of biological role, the globular domain of the protein is located near the polypeptide exit tunnel on the outside of the subunit, while an extended beta-hairpin is found that lines the wall of the exit tunnel in the center of the 70S ribosome. The chain is Large ribosomal subunit protein uL22 from Fusobacterium nucleatum subsp. nucleatum (strain ATCC 25586 / DSM 15643 / BCRC 10681 / CIP 101130 / JCM 8532 / KCTC 2640 / LMG 13131 / VPI 4355).